Reading from the N-terminus, the 155-residue chain is 6,7-dimethyl-8-ribityllumazine synthase (155 aa).

5-amino-6-(D-ribitylamino)uracil-binding positions include Tyr-23, 57–59 (AWE), and 81–83 (CVI). Residue 86–87 (ET) participates in (2S)-2-hydroxy-3-oxobutyl phosphate binding. Residue His-89 is the Proton donor of the active site. Phe-114 contributes to the 5-amino-6-(D-ribitylamino)uracil binding site. (2S)-2-hydroxy-3-oxobutyl phosphate is bound at residue Arg-128.

This sequence belongs to the DMRL synthase family.

The enzyme catalyses (2S)-2-hydroxy-3-oxobutyl phosphate + 5-amino-6-(D-ribitylamino)uracil = 6,7-dimethyl-8-(1-D-ribityl)lumazine + phosphate + 2 H2O + H(+). It participates in cofactor biosynthesis; riboflavin biosynthesis; riboflavin from 2-hydroxy-3-oxobutyl phosphate and 5-amino-6-(D-ribitylamino)uracil: step 1/2. Functionally, catalyzes the formation of 6,7-dimethyl-8-ribityllumazine by condensation of 5-amino-6-(D-ribitylamino)uracil with 3,4-dihydroxy-2-butanone 4-phosphate. This is the penultimate step in the biosynthesis of riboflavin. This chain is 6,7-dimethyl-8-ribityllumazine synthase, found in Rhodopirellula baltica (strain DSM 10527 / NCIMB 13988 / SH1).